A 344-amino-acid chain; its full sequence is Cytochrome c biogenesis protein CcsA (344 aa).

8 helical membrane-spanning segments follow: residues 21–41 (NVAFAVCLGAMLFYWGGAAFP), 45–65 (LLSELGLAGMIGANLTIAALL), 80–100 (LYESLFFLAWGITALHLLALH), 106–126 (WVGVTTAPLATGVVAFAALAL), 151–171 (VMLLAYAALLVGSLLAIAFLI), 252–272 (LIGLGFPLLTIGIIAGAVWAN), 287–307 (WALITWLVFAAYLHARITKGW), and 313–333 (ALLASLGFGVVWVCYLGVNFL).

This sequence belongs to the CcmF/CycK/Ccl1/NrfE/CcsA family. May interact with ccs1.

It localises to the cellular thylakoid membrane. In terms of biological role, required during biogenesis of c-type cytochromes (cytochrome c6 and cytochrome f) at the step of heme attachment. This chain is Cytochrome c biogenesis protein CcsA, found in Synechococcus sp. (strain JA-3-3Ab) (Cyanobacteria bacterium Yellowstone A-Prime).